Consider the following 204-residue polypeptide: Somatotropin (204 aa).

The signal sequence occupies residues 1-17 (MDRVVLLLSVLSLGVSS). Pyrrolidone carboxylic acid is present on Gln-18. Cystine bridges form between Cys-69–Cys-177 and Cys-194–Cys-202.

Belongs to the somatotropin/prolactin family.

The protein resides in the secreted. Functionally, growth hormone plays an important role in growth control and is involved in the regulation of several anabolic processes. Implicated as an osmoregulatory substance important for seawater adaptation. The sequence is that of Somatotropin (gh) from Seriola quinqueradiata (Five-ray yellowtail).